Consider the following 1080-residue polypeptide: Protein HIR1 (1080 aa).

7 WD repeats span residues 15–54, 68–107, 129–168, 171–210, 232–275, 278–336, and 340–381; these read QKDFEVYSCHISPDGSRLATAGGDGHVRVWSTKAIFNADH, HHLGTIHSVRFSPNGRYLASGADDRVICIYQLDSNPPSHT, GHDSDVQDLAWSYDNSILVSVGLDSKVVVWSGHTFEKLKT, VHQSHVKGITFDPANKFFATAGDDRHIKIFRFTPPPPNAT, PLTT…SEIN, GHEG…PVVI, and VASK…WVAT. Disordered stretches follow at residues 430–479, 520–546, and 1051–1080; these read MGDF…NVEK, QLVGAKSTKTTQSDTPQTILDLSKPSH, and DGEDEENDDNNGGGGGENGAVAEEMELEEQ. A compositionally biased stretch (polar residues) spans 442–460; it reads VTTNGSRPTAKNGEANGTT. The stretch at 469-496 forms a coiled coil; that stretch reads KAAPAEENVEKTAERIAELKSRVQVTKD. The segment covering 520–539 has biased composition (polar residues); the sequence is QLVGAKSTKTTQSDTPQTIL.

The protein belongs to the WD repeat HIR1 family.

The protein localises to the nucleus. Functionally, required for replication-independent chromatin assembly and for the periodic repression of histone gene transcription during the cell cycle. The polypeptide is Protein HIR1 (HIR1) (Chaetomium globosum (strain ATCC 6205 / CBS 148.51 / DSM 1962 / NBRC 6347 / NRRL 1970) (Soil fungus)).